Here is a 384-residue protein sequence, read N- to C-terminus: Protein V (384 aa).

Disordered regions lie at residues 1-23 (MDQD…GGRE) and 38-317 (SEPT…TKKG). Residues 7–20 (ILKEDSEVEREAPG) show a composition bias toward basic and acidic residues. Residues 50–59 (LHNTINTPQG) show a composition bias toward polar residues. Ser68 is modified (phosphoserine; by host). Over residues 83 to 101 (RSGEESRVSGRTSKPEAEA) the composition is skewed to basic and acidic residues. Ser125 bears the Phosphoserine; by host mark. Basic and acidic residues predominate over residues 150–168 (GIEDENREMAAHPDKRGED). Over residues 191-206 (ASNNGRSMEPGSSHSA) the composition is skewed to polar residues. Phosphoserine; by host is present on residues Ser192, Ser249, Ser257, and Ser260. Zn(2+) is bound by residues His318, Cys337, Cys341, Cys353, Cys355, Cys358, Cys362, and Cys365.

Belongs to the paramyxoviruses V protein family. In terms of assembly, interacts with host IFIH1/MDA5 and DHX58/LGP2. Interacts with host IRF3. Interacts with host RIGI regulatory protein (via CARDs domain) and host TRIM25 (via SPRY domain); these interactions prevent TRIM25-mediated ubiquitination of RIG-I and disrupts downstream RIG-I signaling.

It is found in the host cytoplasm. In terms of biological role, plays an essential role in the inhibition of host immune response. Prevents the establishment of cellular antiviral state by blocking interferon-alpha/beta (IFN-alpha/beta) production and signaling pathway. Interacts with host IFIH1/MDA5 and DHX58/LGP2 to inhibit the transduction pathway involved in the activation of IFN-beta promoter, thus protecting the virus against cell antiviral state. Also interacts with and inhibits host IRF3. Blocks the type I interferon signaling pathway by disrupting the RIG-I signaling pathway. The protein is Protein V (P/V/C) of Sendai virus (strain Fushimi) (SeV).